Reading from the N-terminus, the 441-residue chain is ATP-dependent protease ATPase subunit HslU (441 aa).

ATP is bound by residues valine 18, 60–65 (GVGKTE), aspartate 254, glutamate 319, and arginine 391.

The protein belongs to the ClpX chaperone family. HslU subfamily. As to quaternary structure, a double ring-shaped homohexamer of HslV is capped on each side by a ring-shaped HslU homohexamer. The assembly of the HslU/HslV complex is dependent on binding of ATP.

It localises to the cytoplasm. Its function is as follows. ATPase subunit of a proteasome-like degradation complex; this subunit has chaperone activity. The binding of ATP and its subsequent hydrolysis by HslU are essential for unfolding of protein substrates subsequently hydrolyzed by HslV. HslU recognizes the N-terminal part of its protein substrates and unfolds these before they are guided to HslV for hydrolysis. This is ATP-dependent protease ATPase subunit HslU from Verminephrobacter eiseniae (strain EF01-2).